The following is a 221-amino-acid chain: Small ribosomal subunit protein uS3c (221 aa).

The 71-residue stretch at 39 to 109 folds into the KH type-2 domain; it reads LRDYLKTRLA…RVIVHVVEIA (71 aa).

Belongs to the universal ribosomal protein uS3 family. In terms of assembly, part of the 30S ribosomal subunit.

Its subcellular location is the plastid. The protein resides in the chloroplast. This is Small ribosomal subunit protein uS3c (rps3) from Nephroselmis olivacea (Green alga).